The sequence spans 362 residues: Holliday junction branch migration complex subunit RuvB (362 aa).

A disordered region spans residues 1–20 (MKRTIMTNTDTFEQPNTGAN). The segment at 15 to 203 (PNTGANEESL…FGFTAHLDFY (189 aa)) is large ATPase domain (RuvB-L). ATP is bound by residues Leu42, Arg43, Gly84, Lys87, Thr88, Thr89, 150–152 (EDF), Arg193, Tyr203, and Arg240. Thr88 serves as a coordination point for Mg(2+). The small ATPAse domain (RuvB-S) stretch occupies residues 204–274 (PHEELEKLIE…DVKEALALYQ (71 aa)). A head domain (RuvB-H) region spans residues 277 to 362 (TEGLDRLDIA…ESAYDVNEMS (86 aa)). DNA-binding residues include Arg332 and Arg337.

This sequence belongs to the RuvB family. Homohexamer. Forms an RuvA(8)-RuvB(12)-Holliday junction (HJ) complex. HJ DNA is sandwiched between 2 RuvA tetramers; dsDNA enters through RuvA and exits via RuvB. An RuvB hexamer assembles on each DNA strand where it exits the tetramer. Each RuvB hexamer is contacted by two RuvA subunits (via domain III) on 2 adjacent RuvB subunits; this complex drives branch migration. In the full resolvosome a probable DNA-RuvA(4)-RuvB(12)-RuvC(2) complex forms which resolves the HJ.

It localises to the cytoplasm. It catalyses the reaction ATP + H2O = ADP + phosphate + H(+). Its function is as follows. The RuvA-RuvB-RuvC complex processes Holliday junction (HJ) DNA during genetic recombination and DNA repair, while the RuvA-RuvB complex plays an important role in the rescue of blocked DNA replication forks via replication fork reversal (RFR). RuvA specifically binds to HJ cruciform DNA, conferring on it an open structure. The RuvB hexamer acts as an ATP-dependent pump, pulling dsDNA into and through the RuvAB complex. RuvB forms 2 homohexamers on either side of HJ DNA bound by 1 or 2 RuvA tetramers; 4 subunits per hexamer contact DNA at a time. Coordinated motions by a converter formed by DNA-disengaged RuvB subunits stimulates ATP hydrolysis and nucleotide exchange. Immobilization of the converter enables RuvB to convert the ATP-contained energy into a lever motion, pulling 2 nucleotides of DNA out of the RuvA tetramer per ATP hydrolyzed, thus driving DNA branch migration. The RuvB motors rotate together with the DNA substrate, which together with the progressing nucleotide cycle form the mechanistic basis for DNA recombination by continuous HJ branch migration. Branch migration allows RuvC to scan DNA until it finds its consensus sequence, where it cleaves and resolves cruciform DNA. The sequence is that of Holliday junction branch migration complex subunit RuvB from Bifidobacterium adolescentis (strain ATCC 15703 / DSM 20083 / NCTC 11814 / E194a).